The following is an 871-amino-acid chain: Transient receptor potential cation channel subfamily V member 4 (871 aa).

Disordered regions lie at residues 1 to 68 (MADP…PNLR) and 110 to 143 (YGTY…PQPP). The Cytoplasmic portion of the chain corresponds to 1 to 469 (MADPGDGPRA…RDKWRKFGAV (469 aa)). Phosphotyrosine is present on Y110. A compositionally biased stretch (basic and acidic residues) spans 116 to 129 (HPSDNKRWRRKVVE). ATP is bound by residues K192, K197, N201, 236–239 (YRGQ), and R248. 2 ANK repeats span residues 237–266 (RGQT…DVHA) and 284–313 (FGEL…KKAD). A 1,2-diacyl-sn-glycero-3-phospho-(1D-myo-inositol-4,5-bisphosphate) is bound at residue 249–251 (RCK). Position 253 is a phosphotyrosine (Y253). A 1,2-diacyl-sn-glycero-3-phospho-(1D-myo-inositol-4,5-bisphosphate) is bound by residues 296 to 299 (NQPH) and K344. An ANK 3 repeat occupies 369–398 (DGLSPLMMAAKTGKIGVFQHIIRREVTDED). Residues 470-490 (SFYINVVSYLCAMVIFTLTAY) form a helical membrane-spanning segment. The Extracellular portion of the chain corresponds to 491–507 (YQPLEGTPPYPYRTTVD). The chain crosses the membrane as a helical span at residues 508 to 534 (YLRLAGEVITLLTGVLFFFTSIKDLFM). Residues 535 to 547 (KKCPGVNSLFVDG) lie on the Cytoplasmic side of the membrane. A helical membrane pass occupies residues 548-568 (SFQLLYFIYSVLVVVSAALYL). Residues 569–572 (AGIE) lie on the Extracellular side of the membrane. The helical transmembrane segment at 573–593 (AYLAVMVFALVLGWMNALYFT) threads the bilayer. The Cytoplasmic portion of the chain corresponds to 594–608 (RGLKLTGTYSIMIQK). The helical transmembrane segment at 609-636 (ILFKDLFRFLLVYLLFMIGYASALVTLL) threads the bilayer. Residues 637-665 (NPCTNMKVCNEDQSNCTVPSYPACRDSET) are Extracellular-facing. The pore-forming intramembrane region spans 666–685 (FSAFLLDLFKLTIGMGDLEM). The Selectivity filter signature appears at 679–682 (GMGD). Ca(2+) is bound at residue D682. At 686–693 (LSSAKYPV) the chain is on the extracellular side. The chain crosses the membrane as a helical span at residues 694–722 (VFILLLVTYIILTFVLLLNMLIALMGETV). At 723 to 871 (GQVSKESKHI…PKWRAEDAPL (149 aa)) the chain is on the cytoplasmic side. Y805 is modified (phosphotyrosine). Residues 812–831 (HTMGRLRRDRWSSVVPRVVE) form an interaction with calmodulin and ITPR3 region. Residue S824 is modified to Phosphoserine.

It belongs to the transient receptor (TC 1.A.4) family. TrpV subfamily. TRPV4 sub-subfamily. As to quaternary structure, homotetramer. Interacts with calmodulin. Interacts with MAP7 and Src family Tyr protein kinases LYN, SRC, FYN, HCK, LCK and YES. Interacts with CTNNB1. The TRPV4 and CTNNB1 complex can interact with CDH1. Part of a complex containing MLC1, AQP4, HEPACAM and ATP1B1. Interacts with PACSIN1, PACSIN2 and PACSIN3 (via SH3 domain). Interacts with ITPR3. Interacts with AQP5; the interaction is probably indirect and regulates TRPV4 activation by hypotonicity. Interacts with ANO1. Interacts (via C-terminus) with PKD2 (via C-terminus). Interacts with DDX3X; this interaction is decreased when the channel is activated. N-glycosylated. In terms of tissue distribution, expressed lung, spleen, kidney, testis, fat, and at very low levels in trigeminal ganglia.

The protein resides in the cell membrane. The protein localises to the apical cell membrane. Its subcellular location is the cell junction. It localises to the adherens junction. It is found in the cell projection. The protein resides in the cilium. The enzyme catalyses Ca(2+)(in) = Ca(2+)(out). Functionally, non-selective calcium permeant cation channel involved in osmotic sensitivity and mechanosensitivity. Activation by exposure to hypotonicity within the physiological range exhibits an outward rectification. Also activated by heat, low pH, citrate and phorbol esters. Increase of intracellular Ca(2+) potentiates currents. Channel activity seems to be regulated by a calmodulin-dependent mechanism with a negative feedback mechanism. Acts as a regulator of intracellular Ca(2+) in synoviocytes. Plays an obligatory role as a molecular component in the nonselective cation channel activation induced by 4-alpha-phorbol 12,13-didecanoate and hypotonic stimulation in synoviocytes and also regulates production of IL-8. Together with PKD2, forms mechano- and thermosensitive channels in cilium. Promotes cell-cell junction formation in skin keratinocytes and plays an important role in the formation and/or maintenance of functional intercellular barriers. Negatively regulates expression of PPARGC1A, UCP1, oxidative metabolism and respiration in adipocytes. Regulates expression of chemokines and cytokines related to pro-inflammatory pathway in adipocytes. Together with AQP5, controls regulatory volume decrease in salivary epithelial cells. Required for normal development and maintenance of bone and cartilage. In its inactive state, may sequester DDX3X at the plasma membrane. When activated, the interaction between both proteins is affected and DDX3X relocalizes to the nucleus. In neurons of the central nervous system, could play a role in triggering voluntary water intake in response to increased sodium concentration in body fluid. This is Transient receptor potential cation channel subfamily V member 4 (Trpv4) from Rattus norvegicus (Rat).